The primary structure comprises 388 residues: Probable peptidoglycan glycosyltransferase FtsW (388 aa).

Over 1-19 the chain is Cytoplasmic; that stretch reads MSAAAPKPRPAHRFHIDQT. Residues 20 to 40 form a helical membrane-spanning segment; sequence LLSVCLCLLGIGFVMVASSSM. Over 41 to 57 the chain is Periplasmic; sequence HLGVKMADDVSYYPFKQ. Residues 58–78 traverse the membrane as a helical segment; sequence LVHIILGLMFAAAILAIPMKY. Residues 79 to 85 are Cytoplasmic-facing; it reads WQKIGQP. A helical transmembrane segment spans residues 86–106; sequence LFIVGLVLLLVVLIPGVGVKV. At 107-117 the chain is on the periplasmic side; that stretch reads NGSTRWLSLLG. A helical membrane pass occupies residues 118-137; it reads LRIQVSEVMKFISVVYMAGY. Residues 138 to 147 lie on the Cytoplasmic side of the membrane; that stretch reads ITRHSDHVRH. Residues 148 to 168 form a helical membrane-spanning segment; that stretch reads SIFGLLRPLMLLSVASILLLL. Residues 169–170 are Periplasmic-facing; sequence EP. A helical membrane pass occupies residues 171 to 191; sequence DFGSAVVILIIAMGMMFLGGA. Residue arginine 192 is a topological domain, cytoplasmic. A helical membrane pass occupies residues 193 to 213; sequence LSPFVALVALISSAGAILASS. At 214-271 the chain is on the periplasmic side; it reads ADYRVKRMTSFLNPWEHARDSGYQLTQALISFGRGEVSGVGLGNGLQKLFYLPEAHTD. Residues 272 to 292 traverse the membrane as a helical segment; the sequence is FLFSVLGEELGLVGVTLVIAL. Topologically, residues 293–315 are cytoplasmic; that stretch reads FTTLVVRGFSIGEQAEAAGERFS. A helical membrane pass occupies residues 316–336; it reads ALVAYGLVIWFGFQAFVNMGV. Topologically, residues 337–348 are periplasmic; the sequence is NMGILPTKGLTL. Residues 349 to 369 form a helical membrane-spanning segment; sequence PLMSYGGGSMIVMCGAMAVLF. Topologically, residues 370-388 are cytoplasmic; the sequence is RIHYEVTELHKSNIKGKSR.

It belongs to the SEDS family. FtsW subfamily.

The protein localises to the cell inner membrane. It carries out the reaction [GlcNAc-(1-&gt;4)-Mur2Ac(oyl-L-Ala-gamma-D-Glu-L-Lys-D-Ala-D-Ala)](n)-di-trans,octa-cis-undecaprenyl diphosphate + beta-D-GlcNAc-(1-&gt;4)-Mur2Ac(oyl-L-Ala-gamma-D-Glu-L-Lys-D-Ala-D-Ala)-di-trans,octa-cis-undecaprenyl diphosphate = [GlcNAc-(1-&gt;4)-Mur2Ac(oyl-L-Ala-gamma-D-Glu-L-Lys-D-Ala-D-Ala)](n+1)-di-trans,octa-cis-undecaprenyl diphosphate + di-trans,octa-cis-undecaprenyl diphosphate + H(+). The protein operates within cell wall biogenesis; peptidoglycan biosynthesis. In terms of biological role, peptidoglycan polymerase that is essential for cell division. The protein is Probable peptidoglycan glycosyltransferase FtsW of Methylomonas methanica (strain DSM 25384 / MC09).